Reading from the N-terminus, the 241-residue chain is 7-cyano-7-deazaguanine synthase (241 aa).

9–19 is a binding site for ATP; it reads LSGGLDSSTVL. C189, C197, C200, and C203 together coordinate Zn(2+).

This sequence belongs to the QueC family. It depends on Zn(2+) as a cofactor.

It carries out the reaction 7-carboxy-7-deazaguanine + NH4(+) + ATP = 7-cyano-7-deazaguanine + ADP + phosphate + H2O + H(+). It participates in purine metabolism; 7-cyano-7-deazaguanine biosynthesis. In terms of biological role, catalyzes the ATP-dependent conversion of 7-carboxy-7-deazaguanine (CDG) to 7-cyano-7-deazaguanine (preQ(0)). The polypeptide is 7-cyano-7-deazaguanine synthase (Thermoplasma volcanium (strain ATCC 51530 / DSM 4299 / JCM 9571 / NBRC 15438 / GSS1)).